We begin with the raw amino-acid sequence, 248 residues long: Probable transcriptional regulatory protein Acel_1346 (248 aa).

It belongs to the TACO1 family.

The protein resides in the cytoplasm. The chain is Probable transcriptional regulatory protein Acel_1346 from Acidothermus cellulolyticus (strain ATCC 43068 / DSM 8971 / 11B).